The primary structure comprises 182 residues: Interferon gamma 1 (182 aa).

A signal peptide spans 1 to 21 (MIAQNMTIFFWGVCLLTSGWA). N-linked (GlcNAc...) asparagine glycosylation is present at Asn93.

The protein belongs to the type II (or gamma) interferon family. Homodimer. As to expression, highly expressed in spleen. Also detected at lower levels in brain, gill, kidney, heart, intestine and muscle. In immune cell populations, has highest expression in peripheral blood leukocytes and splenocytes. Detected in kidney-derived monocytes, neutrophils, macrophages and leukocytes.

It is found in the secreted. Cytokine which binds to interferon gamma receptor 1-like (ifngr1l). Has activating effects on primary macrophages and neutrophils. Induces nitric oxide production and phagocytic responses in macrophages. Primes macrophages and neutrophils for production of reactive oxygen intermediates (ROI). Stimulates phosphorylation and nuclear localization of the JAK/STAT signal transducer stat1. Promotes increased expression of a number of genes important for macrophage activity, including the interferon regulatory factors irf1, irf2, irf8 and irf9. The chain is Interferon gamma 1 from Carassius auratus (Goldfish).